Reading from the N-terminus, the 665-residue chain is Dystrophia myotonica WD repeat-containing protein (665 aa).

The segment covering 1-11 has biased composition (gly residues); the sequence is MAAGGAEGGPG. Disordered regions lie at residues 1–91 and 100–119; these read MAAG…PALP and LGDPDGAGEPPSTPSGLGAG. An N-acetylalanine modification is found at alanine 2. Residues 52–64 show a composition bias toward pro residues; it reads PAPPQPTQPPPGP. A compositionally biased stretch (low complexity) spans 65 to 76; that stretch reads AAASGPGAAGPA. The segment covering 77–89 has biased composition (pro residues); that stretch reads SSPPPAGPGPGPA. 4 WD repeats span residues 208 to 248, 279 to 318, 321 to 360, and 363 to 445; these read IDKT…TSTP, VGEGPLNEFAFSPDGRHLACVSQDGCLRVFHFDSMLLRGL, SYFGGLLCVCWSPDGRYVVTGGEDDLVTVWSFTEGRVVAR, and GHKS…LSPH. 4 disordered regions span residues 380-413, 446-506, 524-564, and 628-665; these read AEEAASASADGDPSGEEEEPEVTSSDTGAPVSPL, PSLA…SMEP, RDRG…RSRL, and DEETEAQAGQASWPRSPSKSVVEGISSQPGSSPSGTVV. Positions 450–491 are enriched in low complexity; sequence RTRTLPGTPGATPPASGSSRAGETGAGPLPRSLSRSNSLPHP. Residue serine 487 is modified to Phosphoserine. Arginine 543 is subject to Omega-N-methylarginine. A WD 5 repeat occupies 592–629; the sequence is IAQERLTVLLFLEDCIITACQEGLICTWARPGKAFTDE. Residues 634-646 show a composition bias toward polar residues; that stretch reads QAGQASWPRSPSK. The segment covering 653–665 has biased composition (low complexity); it reads SSQPGSSPSGTVV.

Component of the USP12/DMWD/WDR48 deubiquitinating complex. Interacts with USP12; promotes its enzymatic activity. Interacts with USP46. Widely expressed in brain where it localizes to the olfactory bulb, forebrain, thalamus, hippocampus, cerebellum, cortex and hypothalamus (at protein level). Expression seems to be particularly strong in areas of high synaptic density such as the glomerular layer of the olfactory bulb, and mossy fiber terminal fields of the hippocampus (at protein level). Expressed in retina, with strongest expression in the external and internal plexiform layers (at protein level). Strongly expressed in brain and testis. Also detected at lower levels in heart, kidney, liver, lung, ovary, uterus, bladder and skeletal muscle. In testis, expression seems to be restricted to secondary spermatocytes.

It localises to the cytoplasm. The protein resides in the nucleus. Its subcellular location is the perikaryon. It is found in the cell projection. The protein localises to the dendrite. Functionally, regulator of the deubiquitinating USP12/DMWD/WDR48 complex. Functions as a cofactor that promotes USP12 enzymatic activity. This chain is Dystrophia myotonica WD repeat-containing protein (Dmwd), found in Mus musculus (Mouse).